The chain runs to 523 residues: MSNRVIIFDTTLRDGEQALAASLTVKEKLQIALSLERLGVDVMEVGFPVSSPGDFNSVQTIANTVKNSRVCALARALEKDIDAAAQSLSVADQFRIHTFISTSTIHVESKLKRSFDQVLEMAVGAVKYARRFTDDVEFSCEDAGRTPIDNLCRMVEEAIKAGARTINIPDTVGYTIPSEFGGIIETLFNRVPNIDQAIISVHCHDDLGLSVANSITAVQQGARQIECTVNGIGERAGNCSLEEIAMILSTRKDSLGLETGINAKEIHRTSNLVSQLCNMPVQANKAIVGANAFTHSSGIHQDGMLKSQNTYEIMTPESIGLHRNNLNMTSRSGRHVIKHRMEEMGYGNKDYDMDTLYEAFLQLADKKGQVFDYDLEALAFMEAQVDEEADYKLAQLVVHSDSTEGNATATVKLEIDGKTVTEAATGNGPVDAAYNAIARASQCEVNITSYKLSAKGEGQNALGQVDIEANYNEQSFHGVGLATDVVEASVQALVHVMNLTSRADKVADCKEKIQKDRSELGGV.

Residues valine 5–histidine 267 form the Pyruvate carboxyltransferase domain. 4 residues coordinate Mn(2+): aspartate 14, histidine 202, histidine 204, and asparagine 238. Residues lysine 392–valine 523 form a regulatory domain region.

Belongs to the alpha-IPM synthase/homocitrate synthase family. LeuA type 1 subfamily. Homodimer. Mn(2+) is required as a cofactor.

It localises to the cytoplasm. The catalysed reaction is 3-methyl-2-oxobutanoate + acetyl-CoA + H2O = (2S)-2-isopropylmalate + CoA + H(+). It functions in the pathway amino-acid biosynthesis; L-leucine biosynthesis; L-leucine from 3-methyl-2-oxobutanoate: step 1/4. Functionally, catalyzes the condensation of the acetyl group of acetyl-CoA with 3-methyl-2-oxobutanoate (2-ketoisovalerate) to form 3-carboxy-3-hydroxy-4-methylpentanoate (2-isopropylmalate). This Shewanella sediminis (strain HAW-EB3) protein is 2-isopropylmalate synthase.